The chain runs to 208 residues: ATP-dependent Clp protease proteolytic subunit (208 aa).

Ser112 functions as the Nucleophile in the catalytic mechanism. His137 is a catalytic residue.

Belongs to the peptidase S14 family. Fourteen ClpP subunits assemble into 2 heptameric rings which stack back to back to give a disk-like structure with a central cavity, resembling the structure of eukaryotic proteasomes.

The protein resides in the cytoplasm. The enzyme catalyses Hydrolysis of proteins to small peptides in the presence of ATP and magnesium. alpha-casein is the usual test substrate. In the absence of ATP, only oligopeptides shorter than five residues are hydrolyzed (such as succinyl-Leu-Tyr-|-NHMec, and Leu-Tyr-Leu-|-Tyr-Trp, in which cleavage of the -Tyr-|-Leu- and -Tyr-|-Trp bonds also occurs).. Its function is as follows. Cleaves peptides in various proteins in a process that requires ATP hydrolysis. Has a chymotrypsin-like activity. Plays a major role in the degradation of misfolded proteins. This chain is ATP-dependent Clp protease proteolytic subunit, found in Buchnera aphidicola subsp. Acyrthosiphon pisum (strain APS) (Acyrthosiphon pisum symbiotic bacterium).